The sequence spans 397 residues: Tryptophan synthase beta chain (397 aa).

N6-(pyridoxal phosphate)lysine is present on K91.

Belongs to the TrpB family. As to quaternary structure, tetramer of two alpha and two beta chains. It depends on pyridoxal 5'-phosphate as a cofactor.

The catalysed reaction is (1S,2R)-1-C-(indol-3-yl)glycerol 3-phosphate + L-serine = D-glyceraldehyde 3-phosphate + L-tryptophan + H2O. Its pathway is amino-acid biosynthesis; L-tryptophan biosynthesis; L-tryptophan from chorismate: step 5/5. Functionally, the beta subunit is responsible for the synthesis of L-tryptophan from indole and L-serine. This chain is Tryptophan synthase beta chain, found in Bacillus cereus (strain Q1).